Reading from the N-terminus, the 314-residue chain is HTH-type transcriptional regulator LeuO (314 aa).

Positions 22–79 (VDLNLLTVFDAVMQEQNITRAAHVLGMSQPAVSNAVARLKVMFNDELFVRYGRGIQPT) constitute an HTH lysR-type domain. The segment at residues 39-58 (ITRAAHVLGMSQPAVSNAVA) is a DNA-binding region (H-T-H motif).

This sequence belongs to the LysR transcriptional regulatory family.

A global transcription factor. Activates transcription of the 9 following operons; yjjQ-bglJ, yjjP, acrEF, ybdO, yjcRQP, casABCDE12, rhsD-ybbC, fepE and gltF, in most cases it probably interferes with silencing by H-NS and activates transcription. Represses transcription of the 3 following operons; uxaCA, sdaCB and btsT. H-NS repression of the bgl operon, leading to the ability to metabolize some beta-glucosides. It also directly activates the bgl operon. Activation is H-NS and BglJ-RcsB independent. The polypeptide is HTH-type transcriptional regulator LeuO (leuO) (Escherichia coli (strain K12)).